Here is a 58-residue protein sequence, read N- to C-terminus: Conotoxin Leo-T2 (58 aa).

The N-terminal stretch at 1-22 (MRCLPVFIILPLLIPSAPSVDA) is a signal peptide. A propeptide spanning residues 23-47 (QPMTEDDVPLASFHEQTLQELWNKR) is cleaved from the precursor.

Belongs to the conotoxin T superfamily. In terms of processing, contains 2 disulfide bonds that can be either 'C1-C3, C2-C4' or 'C1-C4, C2-C3', since these disulfide connectivities have been observed for conotoxins with cysteine framework V (for examples, see AC P0DQQ7 and AC P81755). As to expression, expressed by the venom duct.

It is found in the secreted. The chain is Conotoxin Leo-T2 from Conus leopardus (Leopard cone).